We begin with the raw amino-acid sequence, 1010 residues long: MSQLRLLLFRLGPQARKLLATRDIAAFGGRRRSSGPPTTIPRSRGGVSPSYVEEMYFAWLENPQSVHKSWDNFFQRATKEASVGPAQPQPPAVIQESRASVSSCTKTSKLVEDHLAVQSLIRAYQIRGHHVAQLDPLGILDADLDSFVPSDLITTIDKLAFYDLQEADLDKEFRLPTTTFIGGSENTLSLREIIRRLESTYCQHIGLEFMFINDVEQCQWIRQKFETPGVMKFSIEEKRTLLARLVRSMRFEDFLARKWSSEKRFGLEGCEVMIPALKTIIDKSSEMGVENVILGMPHRGRLNVLANVIRKDLEQIFCQFDPKLEAADEGSGDVKYHLGMYHERINRVTNRNITLSLVANPSHLEAVDPVVQGKTKAEQFYRGDAQGRKVMSILVHGDAAFAGQGVVYETFHLSDLPSYTTNGTVHVVVNNQIGFTTDPRMARSSPYPTDVARVVNAPIFHVNADDPEAVIYVCSVAAEWRNTFNKDVVVDLVCYRRRGHNEMDEPMFTQPLMYKQIHKQVPVLKKYADKLIAEGTVTLQEFEEEIAKYDRICEEAYGRSKDKKILHIKHWLDSPWPGFFNVDGEPKSMTYPTTGIPEDTLSHIGNVASSVPLEDFKIHTGLSRILRGRADMTKKRTVDWALAEYMAFGSLLKEGIHVRLSGQDVERGTFSHRHHVLHDQDVDRRTCVPMNHLWPDQAPYTVCNSSLSEYGVLGFELGYAMASPNALVLWEAQFGDFHNTAQCIIDQFISTGQAKWVRHNGIVLLLPHGMEGMGPEHSSARPERFLQMSNDDSDAYPVFTEDFEVSQLYDCNWIVVNCSTPASYFHVLRRQVLLPFRKPLIVFTPKSLLRHPDAKSSFDQMVSGTSFQRMIPEDGPAAQSPERVERLIFCTGKVYYDLVKERSSQGLEKQVAITRLEQISPFPFDLIMREAEKYSGAELVWCQEEHKNMGYYDYISPRFMTLLGHSRPIWYVGREPAAAPATGNKNTHLVSLRKFLDTAFNLKAFEGKTF.

The transit peptide at 1–107 (MSQLRLLLFR…RASVSSCTKT (107 aa)) directs the protein to the mitochondrion. The interval 28-47 (GGRRRSSGPPTTIPRSRGGV) is disordered. Ca(2+) is bound by residues His130, Asp143, and Asp145. Thiamine diphosphate-binding residues include Arg299, Asp398, Asn431, Ile433, and Gln663. Mg(2+)-binding residues include Asp398, Asn431, and Ile433.

It belongs to the alpha-ketoglutarate dehydrogenase family. As to quaternary structure, the OGDHC complex comprises multiple copies of three catalytic enzyme components, the 2-oxoglutarate dehydrogenase (OGDH/E1), the dihydrolipoamide dehydrogenase (DLST/E2) and the dihydrolipoamide dehydrogenase (DLD/E3). OGDHL/E1-like isoenzyme may replace OGDH in the OGDHC complex in the brain. The presence of either ODGH/E1 or ODGHL/E1-like isoenzyme in the complex may depend on its tissular distribution. It depends on thiamine diphosphate as a cofactor. The cofactor is Mg(2+). As to expression, the OGDHL-containing OGDHC complex is present in the brain, but not in the heart.

The protein localises to the mitochondrion matrix. It carries out the reaction N(6)-[(R)-lipoyl]-L-lysyl-[protein] + 2-oxoglutarate + H(+) = N(6)-[(R)-S(8)-succinyldihydrolipoyl]-L-lysyl-[protein] + CO2. Functionally, 2-oxoglutarate dehydrogenase (E1-like) component of the 2-oxoglutarate dehydrogenase multienzyme complex (OGDHC) which mediates the decarboxylation of alpha-ketoglutarate in the tricarboxylic acid cycle. The OGDHC complex catalyzes the overall conversion of 2-oxoglutarate to succinyl-CoA and CO(2) while reducing NAD(+) to NADH. The OGDHC complex is mainly active in the mitochondrion. Involved in the inhibition of cell proliferation and in apoptosis. In Rattus norvegicus (Rat), this protein is 2-oxoglutarate dehydrogenase-like, mitochondrial.